The sequence spans 431 residues: Peptidase B (431 aa).

The Mn(2+) site is built by Lys-196 and Asp-201. The active site involves Lys-208. Mn(2+) is bound by residues Asp-219, Asp-278, and Glu-280. Residue Arg-282 is part of the active site.

Belongs to the peptidase M17 family. Homohexamer. Mn(2+) is required as a cofactor.

The protein resides in the cytoplasm. It catalyses the reaction Release of an N-terminal amino acid, Xaa, from a peptide or arylamide. Xaa is preferably Glu or Asp but may be other amino acids, including Leu, Met, His, Cys and Gln.. Its function is as follows. Probably plays an important role in intracellular peptide degradation. The sequence is that of Peptidase B from Serratia proteamaculans (strain 568).